We begin with the raw amino-acid sequence, 141 residues long: Large ribosomal subunit protein uL11 (141 aa).

It belongs to the universal ribosomal protein uL11 family. As to quaternary structure, part of the ribosomal stalk of the 50S ribosomal subunit. Interacts with L10 and the large rRNA to form the base of the stalk. L10 forms an elongated spine to which L12 dimers bind in a sequential fashion forming a multimeric L10(L12)X complex. One or more lysine residues are methylated.

Forms part of the ribosomal stalk which helps the ribosome interact with GTP-bound translation factors. In Amoebophilus asiaticus (strain 5a2), this protein is Large ribosomal subunit protein uL11.